A 137-amino-acid polypeptide reads, in one-letter code: ATP synthase epsilon chain, chloroplastic (137 aa).

The protein belongs to the ATPase epsilon chain family. As to quaternary structure, F-type ATPases have 2 components, CF(1) - the catalytic core - and CF(0) - the membrane proton channel. CF(1) has five subunits: alpha(3), beta(3), gamma(1), delta(1), epsilon(1). CF(0) has three main subunits: a, b and c.

It localises to the plastid. The protein localises to the chloroplast thylakoid membrane. Functionally, produces ATP from ADP in the presence of a proton gradient across the membrane. The protein is ATP synthase epsilon chain, chloroplastic of Medicago sativa (Alfalfa).